Reading from the N-terminus, the 450-residue chain is MFNNLTQRFLKIIKKISNKGRLTEKNIKETLREIRIALLEADVALPVVKNFIPSIQKSVIGNQVNKSLTPGQELIKIVKKELTLILGKENHSLNLSVTPPAIILMIGLQGSGKTTTTAKLGQLIRTKYKKKVIVTSIDIYRLAAIKQLKMLSKQAKISFFPSNNTQSPKDIVQHAIQHAKLKFYDVLLIDTAGRLQIDKKMMNELLDVYNISHPIETFFVADAMFGQDSINVINEFNKYLPVSSFIITKTDSDTRAGIILSIKYLTKKPIKFIGTGEKLEELELFYPDRIASRILGMGDMLSLIENIENKIDKKHIKKFSNTIKKYNTFNFNDMLLHINQIKKIGGVNSILGKLPKTQTIFNSFQNNIDENILLKMKTIINSMTISERHQPELIKGSRKRRISLGSGIPIPEINQLLKQFNNIKKIMKTIKKGGVTKIMQGINNIIKNKF.

GTP is bound by residues 107-114 (GLQGSGKT), 190-194 (DTAGR), and 248-251 (TKTD).

Belongs to the GTP-binding SRP family. SRP54 subfamily. Part of the signal recognition particle protein translocation system, which is composed of SRP and FtsY. SRP is a ribonucleoprotein composed of Ffh and a 4.5S RNA molecule.

The protein resides in the cytoplasm. The enzyme catalyses GTP + H2O = GDP + phosphate + H(+). In terms of biological role, involved in targeting and insertion of nascent membrane proteins into the cytoplasmic membrane. Binds to the hydrophobic signal sequence of the ribosome-nascent chain (RNC) as it emerges from the ribosomes. The SRP-RNC complex is then targeted to the cytoplasmic membrane where it interacts with the SRP receptor FtsY. Interaction with FtsY leads to the transfer of the RNC complex to the Sec translocase for insertion into the membrane, the hydrolysis of GTP by both Ffh and FtsY, and the dissociation of the SRP-FtsY complex into the individual components. The sequence is that of Signal recognition particle protein from Buchnera aphidicola subsp. Baizongia pistaciae (strain Bp).